We begin with the raw amino-acid sequence, 274 residues long: Elongation factor Ts (274 aa).

An involved in Mg(2+) ion dislocation from EF-Tu region spans residues 82 to 85 (TDFV).

Belongs to the EF-Ts family.

It localises to the cytoplasm. Associates with the EF-Tu.GDP complex and induces the exchange of GDP to GTP. It remains bound to the aminoacyl-tRNA.EF-Tu.GTP complex up to the GTP hydrolysis stage on the ribosome. This Christiangramia forsetii (strain DSM 17595 / CGMCC 1.15422 / KT0803) (Gramella forsetii) protein is Elongation factor Ts.